A 162-amino-acid polypeptide reads, in one-letter code: Probable chemoreceptor glutamine deamidase CheD (162 aa).

It belongs to the CheD family.

The enzyme catalyses L-glutaminyl-[protein] + H2O = L-glutamyl-[protein] + NH4(+). In terms of biological role, probably deamidates glutamine residues to glutamate on methyl-accepting chemotaxis receptors (MCPs), playing an important role in chemotaxis. The sequence is that of Probable chemoreceptor glutamine deamidase CheD from Caldanaerobacter subterraneus subsp. tengcongensis (strain DSM 15242 / JCM 11007 / NBRC 100824 / MB4) (Thermoanaerobacter tengcongensis).